The following is a 242-amino-acid chain: MTFDIFPAVDLRGGRCVQLVQGVPGSEVVSLDDPLVQAVRWADMGADHLHIIDLDGAIEGTRLNAPILRRIVGELEVFVQVGGGIRSRSDVAEVLDTGVDRVILGTMALRDPPVVKELAEEYGPDRIMVALDVRDGRVTSEGWQRTLEFDAIELGIVFESFGAGSILFTNIDTEGQQRGVDPEPTRELVEAVSIPVIAAGGVSSLDDIKLLSDAGAAGAVIGTAIYTGTLNLREALELAKTL.

The active-site Proton acceptor is aspartate 10. The Proton donor role is filled by aspartate 132.

It belongs to the HisA/HisF family.

It localises to the cytoplasm. It carries out the reaction 1-(5-phospho-beta-D-ribosyl)-5-[(5-phospho-beta-D-ribosylamino)methylideneamino]imidazole-4-carboxamide = 5-[(5-phospho-1-deoxy-D-ribulos-1-ylimino)methylamino]-1-(5-phospho-beta-D-ribosyl)imidazole-4-carboxamide. Its pathway is amino-acid biosynthesis; L-histidine biosynthesis; L-histidine from 5-phospho-alpha-D-ribose 1-diphosphate: step 4/9. The sequence is that of 1-(5-phosphoribosyl)-5-[(5-phosphoribosylamino)methylideneamino] imidazole-4-carboxamide isomerase from Methanothrix thermoacetophila (strain DSM 6194 / JCM 14653 / NBRC 101360 / PT) (Methanosaeta thermophila).